A 505-amino-acid chain; its full sequence is Histidine ammonia-lyase (505 aa).

Positions 141–143 form a cross-link, 5-imidazolinone (Ala-Gly); the sequence is ASG. Ser-142 is modified (2,3-didehydroalanine (Ser)).

The protein belongs to the PAL/histidase family. In terms of processing, contains an active site 4-methylidene-imidazol-5-one (MIO), which is formed autocatalytically by cyclization and dehydration of residues Ala-Ser-Gly.

Its subcellular location is the cytoplasm. The catalysed reaction is L-histidine = trans-urocanate + NH4(+). It functions in the pathway amino-acid degradation; L-histidine degradation into L-glutamate; N-formimidoyl-L-glutamate from L-histidine: step 1/3. This chain is Histidine ammonia-lyase, found in Bacillus cereus (strain ATCC 10987 / NRS 248).